The primary structure comprises 94 residues: ATP synthase F(0) complex subunit f, mitochondrial (94 aa).

Position 2 is an N-acetylalanine (alanine 2). At serine 3 the chain carries Phosphoserine. Position 22 is an N6-acetyllysine (lysine 22). A helical membrane pass occupies residues 68–85; sequence MVLACYVLFSYSFSYKHL.

It belongs to the ATPase F chain family. Component of the ATP synthase complex composed at least of ATP5F1A/subunit alpha, ATP5F1B/subunit beta, ATP5MC1/subunit c (homooctomer), MT-ATP6/subunit a, MT-ATP8/subunit 8, ATP5ME/subunit e, ATP5MF/subunit f, ATP5MG/subunit g, ATP5MK/subunit k, ATP5MJ/subunit j, ATP5F1C/subunit gamma, ATP5F1D/subunit delta, ATP5F1E/subunit epsilon, ATP5PF/subunit F6, ATP5PB/subunit b, ATP5PD/subunit d, ATP5PO/subunit OSCP. ATP synthase complex consists of a soluble F(1) head domain (subunits alpha(3) and beta(3)) - the catalytic core - and a membrane F(0) domain - the membrane proton channel (subunits c, a, 8, e, f, g, k and j). These two domains are linked by a central stalk (subunits gamma, delta, and epsilon) rotating inside the F1 region and a stationary peripheral stalk (subunits F6, b, d, and OSCP).

It is found in the mitochondrion. Its subcellular location is the mitochondrion inner membrane. Subunit f, of the mitochondrial membrane ATP synthase complex (F(1)F(0) ATP synthase or Complex V) that produces ATP from ADP in the presence of a proton gradient across the membrane which is generated by electron transport complexes of the respiratory chain. ATP synthase complex consist of a soluble F(1) head domain - the catalytic core - and a membrane F(1) domain - the membrane proton channel. These two domains are linked by a central stalk rotating inside the F(1) region and a stationary peripheral stalk. During catalysis, ATP synthesis in the catalytic domain of F(1) is coupled via a rotary mechanism of the central stalk subunits to proton translocation. In vivo, can only synthesize ATP although its ATP hydrolase activity can be activated artificially in vitro. Part of the complex F(0) domain. In Homo sapiens (Human), this protein is ATP synthase F(0) complex subunit f, mitochondrial.